The following is a 1396-amino-acid chain: DNA-directed RNA polymerase subunit beta' (1396 aa).

4 residues coordinate Zn(2+): cysteine 70, cysteine 72, cysteine 85, and cysteine 88. Mg(2+) is bound by residues aspartate 460, aspartate 462, and aspartate 464. The Zn(2+) site is built by cysteine 807, cysteine 881, cysteine 888, and cysteine 891. The segment covering 1361–1378 (EPEEIEEPVPEDLEDETA) has biased composition (acidic residues). The interval 1361–1396 (EPEEIEEPVPEDLEDETAGADSAQAASEESVAEGKD) is disordered. Low complexity predominate over residues 1379–1389 (GADSAQAASEE).

The protein belongs to the RNA polymerase beta' chain family. As to quaternary structure, the RNAP catalytic core consists of 2 alpha, 1 beta, 1 beta' and 1 omega subunit. When a sigma factor is associated with the core the holoenzyme is formed, which can initiate transcription. Mg(2+) serves as cofactor. Zn(2+) is required as a cofactor.

The catalysed reaction is RNA(n) + a ribonucleoside 5'-triphosphate = RNA(n+1) + diphosphate. DNA-dependent RNA polymerase catalyzes the transcription of DNA into RNA using the four ribonucleoside triphosphates as substrates. The protein is DNA-directed RNA polymerase subunit beta' of Syntrophotalea carbinolica (strain DSM 2380 / NBRC 103641 / GraBd1) (Pelobacter carbinolicus).